We begin with the raw amino-acid sequence, 200 residues long: Glycerol-3-phosphate acyltransferase (200 aa).

5 helical membrane passes run 4–24 (FALCYMFAAYLLGSISSAVIV), 53–73 (WAALAVFVFDVLKGMIPVWCG), 80–100 (QFELGMVALGACLGHIFPIFF), 115–135 (IAPIGWGVMATMLGTWVLVFV), and 138–158 (GYSSLSAVISALLVPLYVWWF).

The protein belongs to the PlsY family. Probably interacts with PlsX.

It is found in the cell inner membrane. The catalysed reaction is an acyl phosphate + sn-glycerol 3-phosphate = a 1-acyl-sn-glycero-3-phosphate + phosphate. It functions in the pathway lipid metabolism; phospholipid metabolism. Functionally, catalyzes the transfer of an acyl group from acyl-phosphate (acyl-PO(4)) to glycerol-3-phosphate (G3P) to form lysophosphatidic acid (LPA). This enzyme utilizes acyl-phosphate as fatty acyl donor, but not acyl-CoA or acyl-ACP. This Actinobacillus succinogenes (strain ATCC 55618 / DSM 22257 / CCUG 43843 / 130Z) protein is Glycerol-3-phosphate acyltransferase.